The following is a 782-amino-acid chain: MTSIIKLTTLSGVQEESALCYLLQVDEFRFLLDCGWDEHFSVDIIDSLRKHVHQIDAVLLSHPDPLHLGALPFAVGKLGLNCAIYATIPVYKMGQMFMYDLYQSRHNTEDFTLFTLDDVDAAFDKIQQLKFSQIVNLKGKGHGLSITPLPAGHMIGGTIWKIVKDGEEEIVYAVDFNHKREIHLNGCSLEMLSRPSLLITDSFNATYVQPRRKQRDEQLLTNVLETLRGDGNVLIAVDTAGRVLELAQLLDQIWRTKDAGLGVYSLALLNNVSYNVVEFSKSQVEWMSDKLMRCFEDKRNNPFQFRHLSLCHGLSDLARVPSPKVVLASQPDLECGFSRDLFIQWCQDPKNSIILTYRTTPGTLARFLIDNPTEKVTEIELRKRVKLEGKELEEYVEKEKLKKEAAKKLEQSKEADIDSSDESDVEEDVDQPSAHKTKHDLMMKGEGSRKGSFFKQAKKSYPMFPAPEERIKWDEYGEIIKPEDFLVPELQATEEEKSKLESGLTNGEEPMDQDLSDVPTKCVSATESIEIKARVTYIDYEGRSDGDSIKKIINQMKPRQLIIVHGPPEASQDLAECCRAFGGKDIKVYMPKLHETVDATSETHIYQVRLKDSLVSSLQFCKAKDAELAWIDGVLDMRVSKVDTGVILEEGELKDDGEDSEMQVDAPSDSSAMAQQKAMKSLFGEDEKELGEETEIIPTLEPLPPHEVPGHQSVFMNEPRLSDFKQVLLREGIQAEFVGGVLVCNNQVAVRRTETGRIGLEGCLCQDFYRIRDLLYEQYAIV.

The span at 407 to 416 shows a compositional bias: basic and acidic residues; it reads KKLEQSKEAD. The disordered stretch occupies residues 407 to 449; it reads KKLEQSKEADIDSSDESDVEEDVDQPSAHKTKHDLMMKGEGSR. Acidic residues predominate over residues 417-430; that stretch reads IDSSDESDVEEDVD. Residues Ser-419, Ser-420, and Ser-423 each carry the phosphoserine modification. Over residues 439 to 449 the composition is skewed to basic and acidic residues; the sequence is HDLMMKGEGSR. Ser-660 carries the phosphoserine modification.

The protein belongs to the metallo-beta-lactamase superfamily. RNA-metabolizing metallo-beta-lactamase-like family. CPSF2/YSH1 subfamily. Component of the cleavage and polyadenylation specificity factor (CPSF) complex, composed of CPSF1, CPSF2, CPSF3, CPSF4 and FIP1L1. Interacts with CPSF3, CSTF2 and SYMPK. Interacts with ZC3H3.

It localises to the nucleus. In terms of biological role, component of the cleavage and polyadenylation specificity factor (CPSF) complex that play a key role in pre-mRNA 3'-end formation, recognizing the AAUAAA signal sequence and interacting with poly(A) polymerase and other factors to bring about cleavage and poly(A) addition. Involved in the histone 3' end pre-mRNA processing. This chain is Cleavage and polyadenylation specificity factor subunit 2 (Cpsf2), found in Mus musculus (Mouse).